The chain runs to 83 residues: Exodeoxyribonuclease 7 small subunit (83 aa).

It belongs to the XseB family. As to quaternary structure, heterooligomer composed of large and small subunits.

It localises to the cytoplasm. The enzyme catalyses Exonucleolytic cleavage in either 5'- to 3'- or 3'- to 5'-direction to yield nucleoside 5'-phosphates.. Bidirectionally degrades single-stranded DNA into large acid-insoluble oligonucleotides, which are then degraded further into small acid-soluble oligonucleotides. The sequence is that of Exodeoxyribonuclease 7 small subunit from Sinorhizobium medicae (strain WSM419) (Ensifer medicae).